We begin with the raw amino-acid sequence, 427 residues long: Trigger factor (427 aa).

One can recognise a PPIase FKBP-type domain in the interval 163–248 (GNIAIIDFKG…VKGIKAKELP (86 aa)).

The protein belongs to the FKBP-type PPIase family. Tig subfamily.

It is found in the cytoplasm. It catalyses the reaction [protein]-peptidylproline (omega=180) = [protein]-peptidylproline (omega=0). Involved in protein export. Acts as a chaperone by maintaining the newly synthesized protein in an open conformation. Functions as a peptidyl-prolyl cis-trans isomerase. The protein is Trigger factor of Clostridium botulinum (strain Eklund 17B / Type B).